A 707-amino-acid chain; its full sequence is Transcription factor 12 (707 aa).

The segment at 25–109 (AMFSPPVNSG…TPFMNSNLIG (85 aa)) is disordered. 2 stretches are compositionally biased toward polar residues: residues 30-48 (PVNS…QFSG) and 56-76 (GTTS…SRGF). A phosphoserine mark is found at Ser47, Ser67, and Ser79. Over residues 81 to 93 (HYSDHLNDSRLGT) the composition is skewed to basic and acidic residues. Ser98 is subject to Phosphoserine. Residue Lys110 forms a Glycyl lysine isopeptide (Lys-Gly) (interchain with G-Cter in SUMO2) linkage. Phosphoserine occurs at positions 116 and 124. Residues 119–140 (LYSRDSGLSGCQSSLLRQDLGL) are leucine-zipper. Disordered regions lie at residues 140-222 (LGSP…SMFA) and 249-313 (FGGI…ASHT). The segment covering 144–163 (AQLSSSGKPGTPYYSFSATS) has biased composition (polar residues). A Glycyl lysine isopeptide (Lys-Gly) (interchain with G-Cter in SUMO2) cross-link involves residue Lys181. A compositionally biased stretch (low complexity) spans 256-269 (STSHMSQSSSYGSL). Over residues 282 to 306 (VSPTDINTSLPPMSSFHRGSTSSSP) the composition is skewed to polar residues. A Phosphothreonine modification is found at Thr313. A Phosphoserine modification is found at Ser333. Disordered stretches follow at residues 349–393 (PDHT…YENS) and 521–605 (HKTP…ERRM). Over residues 352–363 (TSSSFPSNPSTP) the composition is skewed to low complexity. 2 stretches are compositionally biased toward polar residues: residues 364 to 377 (VGSP…TSQW) and 384 to 393 (APSSPSYENS). Basic and acidic residues-rich tracts occupy residues 543–555 (IKTE…ENLH) and 561–576 (DDMK…DIKV). Lys544 participates in a covalent cross-link: Glycyl lysine isopeptide (Lys-Gly) (interchain with G-Cter in SUMO2). Ser565 is subject to Phosphoserine. A Glycyl lysine isopeptide (Lys-Gly) (interchain with G-Cter in SUMO2) cross-link involves residue Lys575. At Thr582 the chain carries Phosphothreonine. Phosphoserine occurs at positions 583 and 584. The segment covering 593–605 (PEQKIEREKERRM) has biased composition (basic and acidic residues). Positions 602 to 655 (ERRMANNARERLRVRDINEAFKELGRMCQLHLKSEKPQTKLLILHQAVAVILSL) constitute a bHLH domain. Residues Lys634 and Lys678 each participate in a glycyl lysine isopeptide (Lys-Gly) (interchain with G-Cter in SUMO2) cross-link. Residues 657–680 (QQVRERNLNPKAACLKRREEEKVS) form a class A specific domain region. The segment at 675-707 (EEEKVSAASAEPPTTLPGTHPGLSETTNPMGHL) is disordered. The segment covering 686–697 (PPTTLPGTHPGL) has biased composition (low complexity). Polar residues predominate over residues 698–707 (SETTNPMGHL).

In terms of assembly, efficient DNA binding requires dimerization with another bHLH protein. Forms homo- or heterooligomers with myogenin, E12 and ITF2 proteins. Interacts with PTF1. Interacts with RUNX1T1. Interacts with NEUROD2. Interacts with BHLHA9. In terms of tissue distribution, isoform gamma is highly expressed in lung, kidney, spleen, and is expressed at reduced levels in heart, muscle, liver, pituitary, brain and the trigeminal ganglion. The expression of isoform alpha predominates over isoform gamma in the pituitary and the brain.

The protein localises to the nucleus. Transcriptional regulator. Involved in the initiation of neuronal differentiation. Activates transcription by binding to the E box (5'-CANNTG-3'). May be involved in the functional network that regulates the development of the GnRH axis. In Rattus norvegicus (Rat), this protein is Transcription factor 12 (Tcf12).